We begin with the raw amino-acid sequence, 1342 residues long: DNA-directed RNA polymerase subunit beta (1342 aa).

Belongs to the RNA polymerase beta chain family. In terms of assembly, the RNAP catalytic core consists of 2 alpha, 1 beta, 1 beta' and 1 omega subunit. When a sigma factor is associated with the core the holoenzyme is formed, which can initiate transcription.

It catalyses the reaction RNA(n) + a ribonucleoside 5'-triphosphate = RNA(n+1) + diphosphate. Functionally, DNA-dependent RNA polymerase catalyzes the transcription of DNA into RNA using the four ribonucleoside triphosphates as substrates. In Proteus mirabilis (strain HI4320), this protein is DNA-directed RNA polymerase subunit beta.